The chain runs to 423 residues: Putative competence-damage inducible protein (423 aa).

The protein belongs to the CinA family.

In Streptococcus pyogenes serotype M18 (strain MGAS8232), this protein is Putative competence-damage inducible protein.